Here is a 210-residue protein sequence, read N- to C-terminus: Redox-sensing transcriptional repressor Rex (210 aa).

A DNA-binding region (H-T-H motif) is located at residues 15 to 54; the sequence is LYYRIFKRFNTDGIEKASSKQIADALGIDSATVRRDFSYF. 89–94 is a binding site for NAD(+); it reads GCGNIG.

Belongs to the transcriptional regulatory Rex family. Homodimer.

The protein resides in the cytoplasm. Its function is as follows. Modulates transcription in response to changes in cellular NADH/NAD(+) redox state. The polypeptide is Redox-sensing transcriptional repressor Rex (Streptococcus agalactiae serotype Ia (strain ATCC 27591 / A909 / CDC SS700)).